We begin with the raw amino-acid sequence, 278 residues long: Maltodextrin transport system permease protein MdxG (278 aa).

The next 6 helical transmembrane spans lie at 12–32 (ICTYLFLTLLSIVIIYPLLIT), 74–94 (TLVIALSVMVLQVTIVTLAGY), 108–128 (LIFFLIIQMVPTMAALTAFYV), 131–151 (MLIGALDQYWFLTAIYIGGGI), 183–203 (IFASIVLPLVKPMLAVQALWA), and 242–262 (VALFAAGAILAALPICVLFFF). The ABC transmembrane type-1 domain maps to 71–263 (YSNTLVIALS…LPICVLFFFL (193 aa)).

It belongs to the binding-protein-dependent transport system permease family. MalFG subfamily. In terms of assembly, the complex is composed of two ATP-binding proteins (MsmX), two transmembrane proteins (MdxF and MdxG) and a solute-binding protein (MdxE).

The protein resides in the cell membrane. In terms of biological role, part of the ABC transporter complex involved in maltodextrin import. Probably responsible for the translocation of the substrate across the membrane. The protein is Maltodextrin transport system permease protein MdxG (mdxG) of Bacillus subtilis (strain 168).